The chain runs to 159 residues: MAEPRKSGLISHGIAAQNRKARFNYTIKDTVEAGIVLRGAEVKSLRMGRATLSEAFAGERDGEMYLFNMYIPEYQGGVLSRFDTKGPRKLLLKRKQIDQLLGAIARQGSTVVPLDVHFNPRGLAKVTLGIAEGRKQHDKRQAIAKRDWERDKARILKNR.

It belongs to the SmpB family.

It localises to the cytoplasm. Its function is as follows. Required for rescue of stalled ribosomes mediated by trans-translation. Binds to transfer-messenger RNA (tmRNA), required for stable association of tmRNA with ribosomes. tmRNA and SmpB together mimic tRNA shape, replacing the anticodon stem-loop with SmpB. tmRNA is encoded by the ssrA gene; the 2 termini fold to resemble tRNA(Ala) and it encodes a 'tag peptide', a short internal open reading frame. During trans-translation Ala-aminoacylated tmRNA acts like a tRNA, entering the A-site of stalled ribosomes, displacing the stalled mRNA. The ribosome then switches to translate the ORF on the tmRNA; the nascent peptide is terminated with the 'tag peptide' encoded by the tmRNA and targeted for degradation. The ribosome is freed to recommence translation, which seems to be the essential function of trans-translation. This Acidiphilium cryptum (strain JF-5) protein is SsrA-binding protein.